The chain runs to 533 residues: UDP-glucuronosyltransferase 1A1 (533 aa).

The N-terminal stretch at 1-25 (MAVESQGGRPLVLGLLLCVLGPVVS) is a signal peptide. N-linked (GlcNAc...) asparagine glycans are attached at residues Asn102, Asn295, and Asn347. Residues 491 to 507 (VIGFLLAVVLTVAFITF) form a helical membrane-spanning segment.

Belongs to the UDP-glycosyltransferase family. In terms of assembly, homodimer. Homooligomer. Interacts with UGT1A3, UGT1A4, UGT1A6, UGT1A7, UGT1A8, UGT1A9 and UGT1A10 to form heterodimers. Isoform 1 interacts with isoform 2/i2 suggesting that oligomerization is involved in negative regulation of transferase activity by isoform 2. Isoform 1 also interacts with respective i2 isoforms of UGT1A3, UGT1A4, UGT1A6, UGT1A7, UGT1A8, UGT1A9 and UGT1A10. In terms of tissue distribution, expressed in liver, colon and small intestine. Not expressed in kidney, esophagus and skin. As to expression, expressed in liver, colon, small intestine and kidney. Not expressed in esophagus and skin.

It localises to the endoplasmic reticulum membrane. The protein resides in the cytoplasm. Its subcellular location is the perinuclear region. It catalyses the reaction glucuronate acceptor + UDP-alpha-D-glucuronate = acceptor beta-D-glucuronoside + UDP + H(+). The enzyme catalyses 17beta-estradiol + UDP-alpha-D-glucuronate = 17beta-estradiol 3-O-(beta-D-glucuronate) + UDP + H(+). The catalysed reaction is 2-hydroxyestrone + UDP-alpha-D-glucuronate = 2-hydroxyestrone 3-O-(beta-D-glucuronate) + UDP + H(+). It carries out the reaction 2-hydroxy-17beta-estradiol + UDP-alpha-D-glucuronate = 2-hydroxy-17beta-estradiol 3-O-(beta-D-glucuronate) + UDP + H(+). It catalyses the reaction 2-methoxy-17beta-estradiol + UDP-alpha-D-glucuronate = 2-methoxy-17beta-estradiol 3-O-(beta-D-glucuronate) + UDP + H(+). The enzyme catalyses 17alpha-estradiol + UDP-alpha-D-glucuronate = 17alpha-estradiol 3-O-(beta-D-glucuronate) + UDP + H(+). The catalysed reaction is 16beta,17beta-estriol + UDP-alpha-D-glucuronate = 16beta,17beta-estriol 16-O-(beta-D-glucuronate) + UDP + H(+). It carries out the reaction losartan + UDP-alpha-D-glucuronate = losartan-2-N-beta-D-glucuronide + UDP. It catalyses the reaction prunetin + UDP-alpha-D-glucuronate = prunetin-4'-O-beta-D-glucuronide + UDP. The enzyme catalyses SN-38 + UDP-alpha-D-glucuronate = SN-38 O-beta-D-glucuronide + UDP + H(+). The catalysed reaction is (4Z,15Z)-bilirubin IXalpha + UDP-alpha-D-glucuronate = (4Z,15Z)-bilirubin IXalpha C12-beta-D-glucuronoside + UDP. It carries out the reaction (4Z,15Z)-bilirubin IXalpha + UDP-alpha-D-glucuronate = (4Z,15Z)-bilirubin IXalpha C8-beta-D-glucuronoside + UDP. It catalyses the reaction (4Z,15Z)-bilirubin IXalpha C8-beta-D-glucuronoside + UDP-alpha-D-glucuronate = (4Z,15Z)-bilirubin IXalpha C8,C12-beta-D-bisglucuronoside + UDP. The enzyme catalyses (4Z,15Z)-bilirubin IXalpha C12-beta-D-glucuronoside + UDP-alpha-D-glucuronate = (4Z,15Z)-bilirubin IXalpha C8,C12-beta-D-bisglucuronoside + UDP. The catalysed reaction is 8-iso-prostaglandin F2alpha + UDP-alpha-D-glucuronate = 8-iso-prostaglandin F2alpha-glucuronide + UDP + H(+). It carries out the reaction (5Z,8Z,11Z,14Z)-eicosatetraenoate + UDP-alpha-D-glucuronate = O-[(5Z),(8Z),(11Z),(14Z)-eicosatetraenoyl]-beta-D-glucuronate + UDP. It catalyses the reaction 15-hydroxy-(5Z,8Z,11Z,13E)-eicosatetraenoate + UDP-alpha-D-glucuronate = 15-O-(beta-D-glucuronosyl)-(5Z,8Z,11Z,14Z)-eicosatetraenoate + UDP + H(+). The enzyme catalyses 20-hydroxy-(5Z,8Z,11Z,14Z)-eicosatetraenoate + UDP-alpha-D-glucuronate = 20-O-(beta-D-glucuronosyl)-(5Z,8Z,11Z,14Z)-eicosatetraenoate + UDP + H(+). The catalysed reaction is prostaglandin B1 + UDP-alpha-D-glucuronate = 15-O-(beta-D-glucuronosyl)-prostaglandin B1 + UDP + H(+). It carries out the reaction (E)-ferulate + UDP-alpha-D-glucuronate = (E)-4-O-(beta-D-glucuronosyl)-ferulate + UDP + H(+). It catalyses the reaction (E)-ferulate + UDP-alpha-D-glucuronate = (E)-ferulic acid beta-D-glucuronate ester + UDP. Functionally, UDP-glucuronosyltransferase (UGT) that catalyzes phase II biotransformation reactions in which lipophilic substrates are conjugated with glucuronic acid to increase the metabolite's water solubility, thereby facilitating excretion into either the urine or bile. Essential for the elimination and detoxification of drugs, xenobiotics and endogenous compounds. Catalyzes the glucuronidation of endogenous estrogen hormones such as estradiol, estrone and estriol. Involved in the glucuronidation of bilirubin, a degradation product occurring in the normal catabolic pathway that breaks down heme in vertebrates. Involved in the glucuronidation of arachidonic acid (AA) and AA-derived eicosanoids including 15-HETE, 20-HETE, PGB1 and F2-isoprostane (8-iso-PGF2alpha). Involved in the glucuronidation of the phytochemical ferulic acid at the phenolic or the carboxylic acid group. Also catalyzes the glucuronidation the isoflavones genistein, daidzein, glycitein, formononetin, biochanin A and prunetin, which are phytoestrogens with anticancer and cardiovascular properties. Involved in the glucuronidation of the AGTR1 angiotensin receptor antagonist losartan, a drug which can inhibit the effect of angiotensin II. Involved in the biotransformation of 7-ethyl-10-hydroxycamptothecin (SN-38), the pharmacologically active metabolite of the anticancer drug irinotecan. In terms of biological role, lacks UGT glucuronidation activity but acts as a negative regulator of isoform 1. This Homo sapiens (Human) protein is UDP-glucuronosyltransferase 1A1.